A 621-amino-acid polypeptide reads, in one-letter code: Archaeal Lon protease (621 aa).

Residues M1–Q117 lie on the Cytoplasmic side of the membrane. G54–S61 is an ATP binding site. Residues A118–L136 traverse the membrane as a helical segment. Residues T137–N141 are Extracellular-facing. A helical membrane pass occupies residues L142–I160. At P161–V621 the chain is on the cytoplasmic side. Positions G423–D602 constitute a Lon proteolytic domain. Active-site residues include S509 and K552.

It belongs to the peptidase S16 family. Archaeal LonB subfamily. Homohexamer. Organized in a ring with a central cavity.

The protein localises to the cell membrane. Functionally, ATP-dependent serine protease that mediates the selective degradation of mutant and abnormal proteins as well as certain short-lived regulatory proteins. Degrades polypeptides processively. The chain is Archaeal Lon protease from Archaeoglobus fulgidus (strain ATCC 49558 / DSM 4304 / JCM 9628 / NBRC 100126 / VC-16).